A 102-amino-acid polypeptide reads, in one-letter code: ATP-dependent Clp protease adapter protein ClpS (102 aa).

Belongs to the ClpS family. Binds to the N-terminal domain of the chaperone ClpA.

In terms of biological role, involved in the modulation of the specificity of the ClpAP-mediated ATP-dependent protein degradation. The polypeptide is ATP-dependent Clp protease adapter protein ClpS (Janthinobacterium sp. (strain Marseille) (Minibacterium massiliensis)).